We begin with the raw amino-acid sequence, 222 residues long: WAP four-disulfide core domain protein 1 (222 aa).

Positions 1–32 are cleaved as a signal peptide; that stretch reads MDSRMLSDQRFCRRIFAAALCVLVLLADSGCA. One can recognise a WAP domain in the interval 61 to 110; sequence HYQKNDRCPPPPQTLPDRACEVPSCRSDSECERHKRCCYNGCIYACLESV. 4 disulfides stabilise this stretch: C68/C98, C80/C102, C85/C97, and C91/C106.

The protein resides in the secreted. Has growth inhibitory activity. The sequence is that of WAP four-disulfide core domain protein 1 (WFDC1) from Gallus gallus (Chicken).